The sequence spans 205 residues: Large ribosomal subunit protein uL4 (205 aa).

The segment at Arg-44 to Ser-79 is disordered.

This sequence belongs to the universal ribosomal protein uL4 family. Part of the 50S ribosomal subunit.

One of the primary rRNA binding proteins, this protein initially binds near the 5'-end of the 23S rRNA. It is important during the early stages of 50S assembly. It makes multiple contacts with different domains of the 23S rRNA in the assembled 50S subunit and ribosome. Functionally, forms part of the polypeptide exit tunnel. The sequence is that of Large ribosomal subunit protein uL4 from Coxiella burnetii (strain Dugway 5J108-111).